Here is a 196-residue protein sequence, read N- to C-terminus: Phosphoheptose isomerase (196 aa).

The 161-residue stretch at 36–196 (MAQALQAEGK…LIDQHLFGGA (161 aa)) folds into the SIS domain. 51–53 (NGG) contributes to the substrate binding site. 2 residues coordinate Zn(2+): His-60 and Glu-64. Residues Glu-64, 93 to 94 (ND), 119 to 121 (STS), Ser-124, and Gln-174 each bind substrate. Residues Gln-174 and His-182 each coordinate Zn(2+).

This sequence belongs to the SIS family. GmhA subfamily. Homotetramer. It depends on Zn(2+) as a cofactor.

It is found in the cytoplasm. It catalyses the reaction 2 D-sedoheptulose 7-phosphate = D-glycero-alpha-D-manno-heptose 7-phosphate + D-glycero-beta-D-manno-heptose 7-phosphate. It functions in the pathway carbohydrate biosynthesis; D-glycero-D-manno-heptose 7-phosphate biosynthesis; D-glycero-alpha-D-manno-heptose 7-phosphate and D-glycero-beta-D-manno-heptose 7-phosphate from sedoheptulose 7-phosphate: step 1/1. Catalyzes the isomerization of sedoheptulose 7-phosphate in D-glycero-D-manno-heptose 7-phosphate. This is Phosphoheptose isomerase from Alkalilimnicola ehrlichii (strain ATCC BAA-1101 / DSM 17681 / MLHE-1).